Consider the following 155-residue polypeptide: Ribosome maturation factor RimP (155 aa).

Belongs to the RimP family.

Its subcellular location is the cytoplasm. Its function is as follows. Required for maturation of 30S ribosomal subunits. In Staphylococcus epidermidis (strain ATCC 35984 / DSM 28319 / BCRC 17069 / CCUG 31568 / BM 3577 / RP62A), this protein is Ribosome maturation factor RimP.